The sequence spans 420 residues: uncharacterized protein (420 aa).

One can recognise a YcaO domain in the interval 79–420 (GKGIDNEAAM…AVNTIRGAES (342 aa)).

This is an uncharacterized protein from Rhizobium leguminosarum bv. trifolii.